The primary structure comprises 267 residues: Eukaryotic translation initiation factor 3 subunit K (267 aa).

Residues Phe-46 to Arg-233 form the PCI domain.

This sequence belongs to the eIF-3 subunit K family. As to quaternary structure, component of the eukaryotic translation initiation factor 3 (eIF-3) complex.

The protein localises to the cytoplasm. Functionally, component of the eukaryotic translation initiation factor 3 (eIF-3) complex, which is involved in protein synthesis of a specialized repertoire of mRNAs and, together with other initiation factors, stimulates binding of mRNA and methionyl-tRNAi to the 40S ribosome. The eIF-3 complex specifically targets and initiates translation of a subset of mRNAs involved in cell proliferation. The protein is Eukaryotic translation initiation factor 3 subunit K of Aspergillus niger (strain ATCC MYA-4892 / CBS 513.88 / FGSC A1513).